The chain runs to 158 residues: Protein Smg homolog (158 aa).

It belongs to the Smg family.

The polypeptide is Protein Smg homolog (Vibrio atlanticus (strain LGP32) (Vibrio splendidus (strain Mel32))).